The following is a 357-amino-acid chain: UDP-N-acetylglucosamine--N-acetylmuramyl-(pentapeptide) pyrophosphoryl-undecaprenol N-acetylglucosamine transferase (357 aa).

UDP-N-acetyl-alpha-D-glucosamine-binding positions include 11 to 13 (TGG), Asn120, Arg161, Ser188, and Gln281.

It belongs to the glycosyltransferase 28 family. MurG subfamily.

It is found in the cell inner membrane. The catalysed reaction is di-trans,octa-cis-undecaprenyl diphospho-N-acetyl-alpha-D-muramoyl-L-alanyl-D-glutamyl-meso-2,6-diaminopimeloyl-D-alanyl-D-alanine + UDP-N-acetyl-alpha-D-glucosamine = di-trans,octa-cis-undecaprenyl diphospho-[N-acetyl-alpha-D-glucosaminyl-(1-&gt;4)]-N-acetyl-alpha-D-muramoyl-L-alanyl-D-glutamyl-meso-2,6-diaminopimeloyl-D-alanyl-D-alanine + UDP + H(+). The protein operates within cell wall biogenesis; peptidoglycan biosynthesis. Cell wall formation. Catalyzes the transfer of a GlcNAc subunit on undecaprenyl-pyrophosphoryl-MurNAc-pentapeptide (lipid intermediate I) to form undecaprenyl-pyrophosphoryl-MurNAc-(pentapeptide)GlcNAc (lipid intermediate II). The protein is UDP-N-acetylglucosamine--N-acetylmuramyl-(pentapeptide) pyrophosphoryl-undecaprenol N-acetylglucosamine transferase of Prochlorococcus marinus (strain SARG / CCMP1375 / SS120).